Consider the following 510-residue polypeptide: Histidine ammonia-lyase (510 aa).

Residues 143–145 constitute a cross-link (5-imidazolinone (Ala-Gly)); the sequence is ASG. Position 144 is a 2,3-didehydroalanine (Ser) (Ser-144).

This sequence belongs to the PAL/histidase family. In terms of processing, contains an active site 4-methylidene-imidazol-5-one (MIO), which is formed autocatalytically by cyclization and dehydration of residues Ala-Ser-Gly.

It is found in the cytoplasm. The enzyme catalyses L-histidine = trans-urocanate + NH4(+). It functions in the pathway amino-acid degradation; L-histidine degradation into L-glutamate; N-formimidoyl-L-glutamate from L-histidine: step 1/3. The sequence is that of Histidine ammonia-lyase from Aliivibrio fischeri (strain ATCC 700601 / ES114) (Vibrio fischeri).